The following is a 36-amino-acid chain: Pancreatic polypeptide (36 aa).

Residue Tyr36 is modified to Tyrosine amide.

It belongs to the NPY family.

The protein resides in the secreted. Functionally, hormone secreted by pancreatic cells that acts as a regulator of pancreatic and gastrointestinal functions probably by signaling through the G protein-coupled receptor NPY4R2. This chain is Pancreatic polypeptide (PPY), found in Oryctolagus cuniculus (Rabbit).